The chain runs to 168 residues: Protein YciE (168 aa).

In Escherichia coli (strain K12), this protein is Protein YciE (yciE).